Consider the following 38-residue polypeptide: Alpha-2-macroglobulin homolog (38 aa).

The segment at residues 27–30 (CGEQ) is a cross-link (isoglutamyl cysteine thioester (Cys-Gln)).

It belongs to the protease inhibitor I39 (alpha-2-macroglobulin) family. In terms of assembly, homodimer; disulfide-linked. Hemolymph.

The protein resides in the secreted. Its function is as follows. Is able to inhibit all four classes of proteinases by a unique 'trapping' mechanism. This protein has a peptide stretch, called the 'bait region' which contains specific cleavage sites for different proteinases. When a proteinase cleaves the bait region, a conformational change is induced in the protein which traps the proteinase. The entrapped enzyme remains active against low molecular weight substrates (activity against high molecular weight substrates is greatly reduced). Following cleavage in the bait region a thioester bond is hydrolyzed and mediates the covalent binding of the protein to the proteinase. The chain is Alpha-2-macroglobulin homolog from Homarus americanus (American lobster).